Reading from the N-terminus, the 139-residue chain is Inactive palmitoleoyl-protein carboxylesterase notum1b (139 aa).

It belongs to the pectinacetylesterase family. Notum subfamily.

Functionally, probable inactive palmitoleoyl-protein carboxylesterase. The chain is Inactive palmitoleoyl-protein carboxylesterase notum1b from Danio rerio (Zebrafish).